The primary structure comprises 657 residues: Pentatricopeptide repeat-containing protein At1g11710, mitochondrial (657 aa).

The N-terminal 74 residues, 1-74 (MFGHVFSRRT…REFRSSPKLA (74 aa)), are a transit peptide targeting the mitochondrion. PPR repeat units follow at residues 147-181 (SPDV…GFCV), 182-216 (SVHA…GYVE), 217-251 (NVNT…GVWP), 252-282 (NVVS…MGMM), 290-324 (NAVT…GVDC), 325-359 (NERT…GLVV), 360-394 (NTVI…NMQI), 395-429 (DRFT…KLVE), 430-464 (DIVC…GLSL), 465-499 (DAIS…NKTS), 500-530 (NLVI…MEIK), 531-565 (DIVT…DGEK), 568-602 (SLVT…GVVP), and 603-637 (DSIT…GVTP).

Belongs to the PPR family. P subfamily.

Its subcellular location is the mitochondrion. This Arabidopsis thaliana (Mouse-ear cress) protein is Pentatricopeptide repeat-containing protein At1g11710, mitochondrial.